The sequence spans 119 residues: Toxin ICK-8 (119 aa).

A signal peptide spans 1–19 (MMKLYSLVIIATLAAAAFA). Cystine bridges form between C59–C74, C67–C80, C71–C116, and C73–C87.

It belongs to the neurotoxin 25 family. ICK-8 subfamily. Expressed by the venom gland.

It localises to the secreted. Ion channel inhibitor. In Trittame loki (Brush-footed trapdoor spider), this protein is Toxin ICK-8.